Reading from the N-terminus, the 633-residue chain is Chaperone protein HtpG (633 aa).

The segment at 1–345 (MSADTQSETL…SDDLPLNISR (345 aa)) is a; substrate-binding. Residues 346 to 562 (EMLQHNPMIS…EYDFGMGMQR (217 aa)) are b. Residues 563–633 (LLQAAGHQLP…VRRVNNLLAG (71 aa)) form a c region.

This sequence belongs to the heat shock protein 90 family. Homodimer.

It localises to the cytoplasm. Its function is as follows. Molecular chaperone. Has ATPase activity. This Halorhodospira halophila (strain DSM 244 / SL1) (Ectothiorhodospira halophila (strain DSM 244 / SL1)) protein is Chaperone protein HtpG.